Here is a 349-residue protein sequence, read N- to C-terminus: Polyamine aminopropyltransferase 2 (349 aa).

In terms of domain architecture, PABS spans 29–267; sequence DGAITAIEDS…SSWGFLLASD (239 aa). Glutamine 60 is an S-methyl-5'-thioadenosine binding site. Spermidine is bound by residues histidine 91 and glutamate 115. S-methyl-5'-thioadenosine contacts are provided by residues aspartate 135 and 167–168; that span reads DG. Aspartate 185 serves as the catalytic Proton acceptor. Proline 194 is an S-methyl-5'-thioadenosine binding site.

It belongs to the spermidine/spermine synthase family. As to quaternary structure, homodimer or homotetramer.

The protein resides in the cytoplasm. It catalyses the reaction S-adenosyl 3-(methylsulfanyl)propylamine + putrescine = S-methyl-5'-thioadenosine + spermidine + H(+). It participates in amine and polyamine biosynthesis; spermidine biosynthesis; spermidine from putrescine: step 1/1. Catalyzes the irreversible transfer of a propylamine group from the amino donor S-adenosylmethioninamine (decarboxy-AdoMet) to putrescine (1,4-diaminobutane) to yield spermidine. The chain is Polyamine aminopropyltransferase 2 from Pseudomonas aeruginosa (strain ATCC 15692 / DSM 22644 / CIP 104116 / JCM 14847 / LMG 12228 / 1C / PRS 101 / PAO1).